Consider the following 307-residue polypeptide: Putative F-box/LRR-repeat protein 22 (307 aa).

Residues 1–15 (MVTSSSSPPLATSQL) are compositionally biased toward polar residues. Residues 1–26 (MVTSSSSPPLATSQLPVMKGEEKPSN) are disordered. Residues 24 to 71 (PSNWAELPPDLLSSILLRLSPLEILENARKVCRSWRRVSKDPLIWRRI) form the F-box domain. 5 LRR repeats span residues 108-133 (WRFQTTSLLNYMAERSSNLRRLRVKG), 158-183 (YCSIEEEHFKTIGQACPNLKTLKLVG), 185-210 (WSHLNESDNDALAIADTMPGLLHLQL), 212-237 (SNGLTNIGLNAILDGCPHLECLDLRQ), and 244-270 (FGDLERQCLERIKDFRCPNDVLDDYNY). The segment covering 279-289 (IEDEKGEEEEN) has biased composition (acidic residues). The interval 279-307 (IEDEKGEEEENYSYGSDDTEYGYRRSADF) is disordered.

In Arabidopsis thaliana (Mouse-ear cress), this protein is Putative F-box/LRR-repeat protein 22 (FBL22).